Here is a 215-residue protein sequence, read N- to C-terminus: uncharacterized protein (215 aa).

6 helical membrane passes run 3–23 (LLAY…LRSI), 30–50 (ANLL…GLTW), 59–79 (LGLS…LRFW), 87–107 (WGTY…AICV), 122–142 (VSTC…SNIY), and 156–176 (VLFG…LIYV).

Belongs to the major facilitator superfamily. Allantoate permease family.

It is found in the membrane. This is an uncharacterized protein from Saccharomyces cerevisiae (strain ATCC 204508 / S288c) (Baker's yeast).